The primary structure comprises 319 residues: Small ribosomal subunit protein mS35 (319 aa).

The N-terminal 30 residues, 1–30, are a transit peptide targeting the mitochondrion; the sequence is MKVPLGLWKVSRGNLWSTQKRVLTMSRCLN.

Belongs to the mitochondrion-specific ribosomal protein mS35 family. As to quaternary structure, component of the mitochondrial small ribosomal subunit (mt-SSU). Mature yeast 74S mitochondrial ribosomes consist of a small (37S) and a large (54S) subunit. The 37S small subunit contains a 15S ribosomal RNA (15S mt-rRNA) and 34 different proteins. The 54S large subunit contains a 21S rRNA (21S mt-rRNA) and 46 different proteins.

The protein resides in the mitochondrion. Its function is as follows. Component of the mitochondrial ribosome (mitoribosome), a dedicated translation machinery responsible for the synthesis of mitochondrial genome-encoded proteins, including at least some of the essential transmembrane subunits of the mitochondrial respiratory chain. The mitoribosomes are attached to the mitochondrial inner membrane and translation products are cotranslationally integrated into the membrane. The sequence is that of Small ribosomal subunit protein mS35 (RSM24) from Saccharomyces cerevisiae (strain ATCC 204508 / S288c) (Baker's yeast).